The following is a 346-amino-acid chain: Elongation factor Ts (346 aa).

The involved in Mg(2+) ion dislocation from EF-Tu stretch occupies residues T80–V83.

Belongs to the EF-Ts family.

Its subcellular location is the cytoplasm. Functionally, associates with the EF-Tu.GDP complex and induces the exchange of GDP to GTP. It remains bound to the aminoacyl-tRNA.EF-Tu.GTP complex up to the GTP hydrolysis stage on the ribosome. The chain is Elongation factor Ts (tsf) from Streptococcus pneumoniae (strain ATCC BAA-255 / R6).